A 165-amino-acid polypeptide reads, in one-letter code: MTQVTFKHNPVTLVGTERKVGDKAPNFTVVNRDLEEVTLHDYDGKVRLISVVPSIDTSVCSTQTRKFNEEASNLDNTVVLTISVDLPFAQKKWCAAEGLPNAITLSDHRDLSFGEAYGVVMKELRLLARSVFVVNAAGEIVYTEVVPEGSDHPNYEAAIEAAKKA.

The 147-residue stretch at 18 to 164 (RKVGDKAPNF…YEAAIEAAKK (147 aa)) folds into the Thioredoxin domain. The active-site Cysteine sulfenic acid (-SOH) intermediate is the C60. C60 and C94 are oxidised to a cystine.

Belongs to the peroxiredoxin family. Tpx subfamily. In terms of assembly, homodimer.

It catalyses the reaction a hydroperoxide + [thioredoxin]-dithiol = an alcohol + [thioredoxin]-disulfide + H2O. Its function is as follows. Thiol-specific peroxidase that catalyzes the reduction of hydrogen peroxide and organic hydroperoxides to water and alcohols, respectively. Plays a role in cell protection against oxidative stress by detoxifying peroxides. The protein is Thiol peroxidase of Listeria monocytogenes serotype 4b (strain F2365).